A 180-amino-acid polypeptide reads, in one-letter code: Secreted RxLR effector protein 19 (180 aa).

Residues 1-19 (MKLLLRALATFVLLNGVDS) form the signal peptide. One can recognise a Jacalin-type lectin domain in the interval 25-171 (FQKCNVTGGP…IFALGALWGP (147 aa)). Residues 52–77 (RALRLCGVDFVDGIGVTIWDLSVEEN) carry the RxLR-dEER motif.

Belongs to the RxLR effector family.

It is found in the secreted. The protein resides in the host cytoplasm. The protein localises to the host nucleus. Effector that partially suppresses the tobacco programmed cell death induced by cell death-inducing proteins. In Plasmopara viticola (Downy mildew of grapevine), this protein is Secreted RxLR effector protein 19.